The chain runs to 53 residues: Conotoxin Cal22e (53 aa).

Positions 1 to 5 (GRPSA) are excised as a propeptide.

In terms of processing, contains 4 disulfide bonds. In terms of tissue distribution, expressed by the venom duct.

Its subcellular location is the secreted. In terms of biological role, probable neurotoxin with unknown target. Possibly targets ion channels. In Californiconus californicus (California cone), this protein is Conotoxin Cal22e.